Consider the following 147-residue polypeptide: Sulfur acceptor protein CsdE (147 aa).

Cysteine 61 functions as the Cysteine persulfide intermediate in the catalytic mechanism. Cysteine 61 carries the cysteine persulfide modification.

Belongs to the SufE family. Homodimer. Forms a heterodimer with CsdA. Interacts with CsdA and with TcdA/CsdL.

Its function is as follows. Stimulates the cysteine desulfurase activity of CsdA. Contains a cysteine residue (Cys-61) that acts to accept sulfur liberated via the desulfurase activity of CsdA. May be able to transfer sulfur to TcdA/CsdL. Seems to support the function of TcdA in the generation of cyclic threonylcarbamoyladenosine at position 37 (ct(6)A37) in tRNAs that read codons beginning with adenine. Does not appear to participate in Fe/S biogenesis. The chain is Sulfur acceptor protein CsdE (csdE) from Escherichia coli (strain K12).